The sequence spans 241 residues: MPDYMQEIERISEFLRKVLQGKNAVIGISGGIDSSVTLALLTRSIPKERIIPVFMPDRNTQQADYDDVQKLTQKLGLTYREVRIDPMVDSFVSTLAATDRAAIGNIKSRTRMIILYYFANTNGGMVVGTTNRTELLLGYFTKYGDGGCDVEPIEHLYKRDVYELAKILDIPESIMKKKPTAGLWAGQTDEDEIGMSYAQMDEILSDVFDKGTYNDKPEYKKIMEMHSLSDHKRNLPYSLKK.

27-34 (GISGGIDS) lines the ATP pocket. Position 33 (Asp-33) interacts with Mg(2+). Arg-109 lines the deamido-NAD(+) pocket. Residue Thr-129 participates in ATP binding. Glu-134 contacts Mg(2+). 2 residues coordinate deamido-NAD(+): Lys-142 and Asp-149. The ATP site is built by Lys-158 and Thr-180. 231-232 (HK) is a deamido-NAD(+) binding site.

It belongs to the NAD synthetase family. In terms of assembly, homodimer.

It catalyses the reaction deamido-NAD(+) + NH4(+) + ATP = AMP + diphosphate + NAD(+) + H(+). It functions in the pathway cofactor biosynthesis; NAD(+) biosynthesis; NAD(+) from deamido-NAD(+) (ammonia route): step 1/1. Catalyzes the ATP-dependent amidation of deamido-NAD to form NAD. Uses ammonia as a nitrogen source. The chain is NH(3)-dependent NAD(+) synthetase from Thermoplasma acidophilum (strain ATCC 25905 / DSM 1728 / JCM 9062 / NBRC 15155 / AMRC-C165).